A 556-amino-acid chain; its full sequence is Sensory neuron membrane protein 2 (556 aa).

Residues 1–6 (MIHWSL) are Cytoplasmic-facing. The helical transmembrane segment at 7-27 (IVSALGVCVAVLGGYCGWILF) threads the bilayer. Residues 28–522 (PNMVHKKVEQ…KLINTLKTLN (495 aa)) lie on the Extracellular side of the membrane. N-linked (GlcNAc...) asparagine glycans are attached at residues asparagine 66, asparagine 274, asparagine 310, and asparagine 324. Intrachain disulfides connect cysteine 320–cysteine 388 and cysteine 349–cysteine 415. The helical transmembrane segment at 523–543 (IVHWATLCGGIGVAVACLIYY) threads the bilayer. The Cytoplasmic portion of the chain corresponds to 544 to 556 (IYQRGRVVEPPVK).

Belongs to the CD36 family. As to expression, detected in the head and to a lesser extent in legs and wings.

Its subcellular location is the cell membrane. In terms of biological role, plays an olfactory role that is not restricted to pheromone sensitivity. This is Sensory neuron membrane protein 2 from Drosophila melanogaster (Fruit fly).